The primary structure comprises 121 residues: Small ribosomal subunit protein uS11c (121 aa).

It belongs to the universal ribosomal protein uS11 family. As to quaternary structure, part of the 30S ribosomal subunit.

The protein resides in the plastid. It is found in the chloroplast. This is Small ribosomal subunit protein uS11c from Cyanidioschyzon merolae (strain NIES-3377 / 10D) (Unicellular red alga).